Reading from the N-terminus, the 195-residue chain is Antigenic thaumatin-like protein ARB_01183 (195 aa).

Residues 1–22 (MHSNTAVIALSALAALVPAALA) form the signal peptide. 2 disulfides stabilise this stretch: Cys125/Cys153 and Cys130/Cys137. The interval 171–195 (GPKKMFKPVQEKAANRPRHPHARPE) is disordered. The span at 185–195 (NRPRHPHARPE) shows a compositional bias: basic residues.

It belongs to the thaumatin family.

Its subcellular location is the secreted. Might be involved in the inhibition of growth of fungal competitors and pathogenicity. The protein is Antigenic thaumatin-like protein ARB_01183 of Arthroderma benhamiae (strain ATCC MYA-4681 / CBS 112371) (Trichophyton mentagrophytes).